The chain runs to 123 residues: Large-conductance mechanosensitive channel (123 aa).

2 helical membrane-spanning segments follow: residues 14-34 (VLDL…VTSL) and 67-87 (GNFI…FLLV).

Belongs to the MscL family. Homopentamer.

The protein resides in the cell membrane. In terms of biological role, channel that opens in response to stretch forces in the membrane lipid bilayer. May participate in the regulation of osmotic pressure changes within the cell. The polypeptide is Large-conductance mechanosensitive channel (Lacticaseibacillus casei (strain BL23) (Lactobacillus casei)).